The chain runs to 638 residues: Plasma kallikrein (638 aa).

The N-terminal stretch at 1 to 19 (MILFNRVGYFVSLFATVSC) is a signal peptide. 4 Apple domains span residues 21 to 104 (CMTQ…LKQC), 111 to 194 (CHRD…LKSC), 201 to 284 (CPMD…LLTC), and 292 to 375 (CHSK…LRLC). Cystine bridges form between Cys21/Cys104, Cys47/Cys77, Cys51/Cys57, Cys111/Cys194, Cys137/Cys166, Cys141/Cys147, Cys201/Cys284, Cys227/Cys256, Cys231/Cys237, Cys292/Cys375, Cys318/Cys347, Cys322/Cys328, Cys340/Cys345, Cys383/Cys503, Cys419/Cys435, Cys517/Cys584, Cys548/Cys563, and Cys574/Cys602. Asn127 carries an N-linked (GlcNAc...) asparagine glycan. N-linked (GlcNAc...) asparagine glycosylation is present at Asn215. N-linked (GlcNAc...) asparagine glycosylation is present at Asn308. One can recognise a Peptidase S1 domain in the interval 391-626 (IVGGTNASLG…YMDWILEKTQ (236 aa)). Residue Asn396 is glycosylated (N-linked (GlcNAc...) asparagine). Active-site charge relay system residues include His434 and Asp483. A glycan (N-linked (GlcNAc...) asparagine) is linked at Asn494. Catalysis depends on Ser578, which acts as the Charge relay system.

Belongs to the peptidase S1 family. Plasma kallikrein subfamily. In terms of assembly, forms a heterodimer with SERPINA5. The zymogen is activated by factor XIIa, which cleaves the molecule into a light chain, which contains the active site, and a heavy chain, which associates with HMW kininogen. These chains are linked by one or more disulfide bonds.

Its subcellular location is the secreted. It carries out the reaction Cleaves selectively Arg-|-Xaa and Lys-|-Xaa bonds, including Lys-|-Arg and Arg-|-Ser bonds in (human) kininogen to release bradykinin.. With respect to regulation, inhibited by SERPINA5. Functionally, the enzyme cleaves Lys-Arg and Arg-Ser bonds. It activates, in a reciprocal reaction, factor XII after its binding to a negatively charged surface. It also releases bradykinin from HMW kininogen and may also play a role in the renin-angiotensin system by converting prorenin into renin. The sequence is that of Plasma kallikrein (Klkb1) from Mus musculus (Mouse).